An 86-amino-acid chain; its full sequence is UPF0297 protein LCABL_08470 (86 aa).

The protein belongs to the UPF0297 family.

The chain is UPF0297 protein LCABL_08470 from Lacticaseibacillus casei (strain BL23) (Lactobacillus casei).